Reading from the N-terminus, the 280-residue chain is NAD(P)H-quinone oxidoreductase subunit K, chloroplastic (280 aa).

Residues C65, C66, C130, and C161 each coordinate [4Fe-4S] cluster. Residues 257-280 (LLKDWKQSNQKQEQNVKMMKEEEA) are disordered.

Belongs to the complex I 20 kDa subunit family. In terms of assembly, NDH is composed of at least 16 different subunits, 5 of which are encoded in the nucleus. Requires [4Fe-4S] cluster as cofactor.

Its subcellular location is the plastid. The protein localises to the chloroplast thylakoid membrane. It catalyses the reaction a plastoquinone + NADH + (n+1) H(+)(in) = a plastoquinol + NAD(+) + n H(+)(out). The enzyme catalyses a plastoquinone + NADPH + (n+1) H(+)(in) = a plastoquinol + NADP(+) + n H(+)(out). NDH shuttles electrons from NAD(P)H:plastoquinone, via FMN and iron-sulfur (Fe-S) centers, to quinones in the photosynthetic chain and possibly in a chloroplast respiratory chain. The immediate electron acceptor for the enzyme in this species is believed to be plastoquinone. Couples the redox reaction to proton translocation, and thus conserves the redox energy in a proton gradient. The chain is NAD(P)H-quinone oxidoreductase subunit K, chloroplastic from Staurastrum punctulatum (Green alga).